Consider the following 280-residue polypeptide: MHLPREAFLLALAGAFIFPSSQQEKRTQRDLRVVCFYQKDFRNGTKAEQWGKKTPTQIWRGCMSVCNAIVVCLFELGVSETWNSKSCKCDCEGGESPTEFPSIRTGSSMVRGVDCMPECPYHRPLGFEAGSISPDQITCSNQDQYTAWFSSWLPSKARLNTQGFGCAWLSKFQDNTQWLQIDLIDAKVVSGILTQGRCDADEWITKYSLQYRTDEKLNWIYYKDQTGNNRVFYGNSDRSSSVQNLLRPPIVARYIRILPLGWHTRIALRLELLLCMNKCS.

An N-terminal signal peptide occupies residues 1–23 (MHLPREAFLLALAGAFIFPSSQQ). Positions 119–275 (CPYHRPLGFE…IALRLELLLC (157 aa)) constitute an F5/8 type C domain. 2 disulfide bridges follow: Cys-119-Cys-275 and Cys-166-Cys-198.

In terms of assembly, homooctamer of 4 homodimers; disulfide-linked. The homooctamer has a flat, cogwheel structure with a diameter of about 14 nm. Two stacked octamers can assemble to form a hexadecamer.

The protein resides in the secreted. It is found in the cell membrane. Functionally, binds negatively charged membrane lipids, such as phosphatidylserine and phosphoinositides. May play a role in cell-cell adhesion processes in the retina, via homomeric interaction between octamers present on the surface of two neighboring cells. Required for normal structure and function of the retina. This is Retinoschisin (xlrs1) from Takifugu rubripes (Japanese pufferfish).